A 20-amino-acid chain; its full sequence is Cytochrome c oxidase subunit 5A-1, mitochondrial (20 aa).

It belongs to the cytochrome c oxidase subunit 5A family. As to quaternary structure, component of the cytochrome c oxidase (complex IV, CIV), a multisubunit enzyme composed of 14 subunits. The complex is composed of a catalytic core of 3 subunits MT-CO1, MT-CO2 and MT-CO3, encoded in the mitochondrial DNA, and 11 supernumerary subunits COX4I, COX5A, COX5B, COX6A, COX6B, COX6C, COX7A, COX7B, COX7C, COX8 and NDUFA4, which are encoded in the nuclear genome. The complex exists as a monomer or a dimer and forms supercomplexes (SCs) in the inner mitochondrial membrane with NADH-ubiquinone oxidoreductase (complex I, CI) and ubiquinol-cytochrome c oxidoreductase (cytochrome b-c1 complex, complex III, CIII), resulting in different assemblies (supercomplex SCI(1)III(2)IV(1) and megacomplex MCI(2)III(2)IV(2)). Interacts with AFG1L. Interacts with RAB5IF.

It is found in the mitochondrion inner membrane. It participates in energy metabolism; oxidative phosphorylation. Component of the cytochrome c oxidase, the last enzyme in the mitochondrial electron transport chain which drives oxidative phosphorylation. The respiratory chain contains 3 multisubunit complexes succinate dehydrogenase (complex II, CII), ubiquinol-cytochrome c oxidoreductase (cytochrome b-c1 complex, complex III, CIII) and cytochrome c oxidase (complex IV, CIV), that cooperate to transfer electrons derived from NADH and succinate to molecular oxygen, creating an electrochemical gradient over the inner membrane that drives transmembrane transport and the ATP synthase. Cytochrome c oxidase is the component of the respiratory chain that catalyzes the reduction of oxygen to water. Electrons originating from reduced cytochrome c in the intermembrane space (IMS) are transferred via the dinuclear copper A center (CU(A)) of subunit 2 and heme A of subunit 1 to the active site in subunit 1, a binuclear center (BNC) formed by heme A3 and copper B (CU(B)). The BNC reduces molecular oxygen to 2 water molecules using 4 electrons from cytochrome c in the IMS and 4 protons from the mitochondrial matrix. This Thunnus obesus (Bigeye tuna) protein is Cytochrome c oxidase subunit 5A-1, mitochondrial.